A 133-amino-acid polypeptide reads, in one-letter code: Small ribosomal subunit protein uS8 (133 aa).

It belongs to the universal ribosomal protein uS8 family. In terms of assembly, part of the 30S ribosomal subunit.

Functionally, one of the primary rRNA binding proteins, it binds directly to 16S rRNA central domain where it helps coordinate assembly of the platform of the 30S subunit. The polypeptide is Small ribosomal subunit protein uS8 (Sulfolobus acidocaldarius (strain ATCC 33909 / DSM 639 / JCM 8929 / NBRC 15157 / NCIMB 11770)).